The sequence spans 20 residues: Allergen Asp fl 2 (20 aa).

The sequence is that of Allergen Asp fl 2 from Aspergillus flavus.